The sequence spans 209 residues: Methylthioribulose-1-phosphate dehydratase (209 aa).

Zn(2+)-binding residues include His-98 and His-100.

This sequence belongs to the aldolase class II family. MtnB subfamily. Homotetramer. The cofactor is Zn(2+).

It carries out the reaction 5-(methylsulfanyl)-D-ribulose 1-phosphate = 5-methylsulfanyl-2,3-dioxopentyl phosphate + H2O. Its pathway is amino-acid biosynthesis; L-methionine biosynthesis via salvage pathway; L-methionine from S-methyl-5-thio-alpha-D-ribose 1-phosphate: step 2/6. Its function is as follows. Catalyzes the dehydration of methylthioribulose-1-phosphate (MTRu-1-P) into 2,3-diketo-5-methylthiopentyl-1-phosphate (DK-MTP-1-P). This Bacillus subtilis (strain 168) protein is Methylthioribulose-1-phosphate dehydratase (mtnB).